The chain runs to 1025 residues: Multidrug resistance protein MdtC (1025 aa).

Over 1-6 (MKFFAL) the chain is Cytoplasmic. The chain crosses the membrane as a helical span at residues 7-29 (FIYRPVATILLSVAITLCGILGF). The Periplasmic segment spans residues 30–335 (RMLPVAPLPQ…TIRASLEEVE (306 aa)). Residues 336 to 353 (QTLIISVALVILVVFLFL) traverse the membrane as a helical segment. At 354–359 (RSGRAT) the chain is on the cytoplasmic side. Residues 360-379 (IIPAVAVPVSLIGTFAAMYL) traverse the membrane as a helical segment. At 380 to 388 (CGFSLNNLS) the chain is on the periplasmic side. Residues 389–411 (LMALTIATGFVVDDAIVVLENIA) traverse the membrane as a helical segment. The Cytoplasmic segment spans residues 412-430 (RHLEAGMKPLQAALQGTRE). Residues 431-453 (VGFTVLSMSLSLVAVFLPLLLMG) traverse the membrane as a helical segment. The Periplasmic segment spans residues 454-467 (GLPGRLLREFAVTL). A helical membrane pass occupies residues 468–490 (SVAIGISLLVSLTLTPMMCGWML). Residues 491 to 852 (KASKPREQKR…QVFQETMNSQ (362 aa)) are Cytoplasmic-facing. Residues 853–875 (VILIIAAIATVYIVLGILYESYV) traverse the membrane as a helical segment. Topologically, residues 876–894 (HPLTILSTLPSAGVGALLA) are periplasmic. A helical transmembrane segment spans residues 895 to 917 (LELFNAPFSLIALIGIMLLIGIV). Topologically, residues 918 to 947 (KKNAIMMVDFALEAQRHGNLTPQEAIFQAC) are cytoplasmic. The helical transmembrane segment at 948–970 (LLRFRPIMMTTLAALFGALPLVL) threads the bilayer. The Periplasmic portion of the chain corresponds to 971–984 (SGGDGSELRQPLGI). The helical transmembrane segment at 985 to 1007 (TIVGGLVMSQLLTLYTTPVVYLF) threads the bilayer. Topologically, residues 1008-1025 (FDRLRLRFSRKPKQAVTE) are cytoplasmic.

This sequence belongs to the resistance-nodulation-cell division (RND) (TC 2.A.6) family. MdtC subfamily. In terms of assembly, part of a tripartite efflux system composed of MdtA, MdtB and MdtC. MdtC forms a heteromultimer with MdtB.

The protein resides in the cell inner membrane. In terms of biological role, the MdtABC tripartite complex confers resistance against novobiocin and deoxycholate. The chain is Multidrug resistance protein MdtC from Escherichia coli O6:H1 (strain CFT073 / ATCC 700928 / UPEC).